Reading from the N-terminus, the 175-residue chain is Peptide deformylase (175 aa).

Fe cation-binding residues include Cys94 and His136. Glu137 is an active-site residue. His140 provides a ligand contact to Fe cation.

It belongs to the polypeptide deformylase family. The cofactor is Fe(2+).

It catalyses the reaction N-terminal N-formyl-L-methionyl-[peptide] + H2O = N-terminal L-methionyl-[peptide] + formate. Functionally, removes the formyl group from the N-terminal Met of newly synthesized proteins. Requires at least a dipeptide for an efficient rate of reaction. N-terminal L-methionine is a prerequisite for activity but the enzyme has broad specificity at other positions. The chain is Peptide deformylase from Brucella suis biovar 1 (strain 1330).